The following is a 513-amino-acid chain: 2-isopropylmalate synthase (513 aa).

In terms of domain architecture, Pyruvate carboxyltransferase spans 4–266 (IEFFDTSLRD…KSPLVLAETM (263 aa)). Asp-13, His-201, His-203, and Asn-237 together coordinate Mn(2+). The regulatory domain stretch occupies residues 390-513 (ILNNVQIDGH…VEQISAHDGI (124 aa)).

This sequence belongs to the alpha-IPM synthase/homocitrate synthase family. LeuA type 1 subfamily. As to quaternary structure, homodimer. Mn(2+) is required as a cofactor.

It localises to the cytoplasm. The catalysed reaction is 3-methyl-2-oxobutanoate + acetyl-CoA + H2O = (2S)-2-isopropylmalate + CoA + H(+). It functions in the pathway amino-acid biosynthesis; L-leucine biosynthesis; L-leucine from 3-methyl-2-oxobutanoate: step 1/4. In terms of biological role, catalyzes the condensation of the acetyl group of acetyl-CoA with 3-methyl-2-oxobutanoate (2-ketoisovalerate) to form 3-carboxy-3-hydroxy-4-methylpentanoate (2-isopropylmalate). The sequence is that of 2-isopropylmalate synthase from Lactococcus lactis subsp. cremoris (strain SK11).